The chain runs to 536 residues: Uridine 5'-monophosphate transferase (536 aa).

Residues A22–S84 form a disordered region. Residues D31 to H45 are compositionally biased toward polar residues. Over residues E48–P60 the composition is skewed to basic and acidic residues. Polar residues predominate over residues R66–S84. LRR repeat units follow at residues A140 to L164, A165 to K189, L191 to L211, K212 to C234, S236 to L257, and T258 to D282. One can recognise a Fido domain in the interval I377 to Q533.

The protein in the C-terminal section; belongs to the fic family. In terms of assembly, interacts with several members of the Arabidopsis RLCK VIIa subfamily.

The protein localises to the secreted. It is found in the host cell. It localises to the host cell membrane. It carries out the reaction L-seryl-[protein] + UTP = O-(5'-uridylyl)-L-seryl-[protein] + diphosphate. The catalysed reaction is L-threonyl-[protein] + UTP = uridylyl-L-threonyl-[protein] + diphosphate. Functionally, functions both as a virulence and an avirulence gene in Arabidopsis. Causes disease on the Kashmir (Kas) ecotype, but not on Columbia (Col-0) ecotype. Acts by directly uridylylating the conserved phosphorylation sites in the activation loop of a number of host receptor-like cytoplasmic protein kinases (RLCK), including BIK1, RIPK, PBL1 and PBL2, preventing the activation of these kinases and subsequent signal transduction. In susceptible Arabidopsis plants, uridylylation of BIK1 inhibits the PAMP-triggered immunity (PTI) signaling cascade and thereby promotes bacterial virulence. It also inhibits RPM1-dependent effector-triggered immunity (ETI) in mesophyll tissues by targeting RIPK. In contrast, in the resistant ecotype Col-0, xopAC is a major avirulence gene. Uridylylation of PBL2 triggers the PBL2-RKS1 interaction and thus the assembly of the PBL2-RKS1-ZAR1 complex, which, in turn, activates effector-triggered immunity (ETI) against X.campestris. This is Uridine 5'-monophosphate transferase from Xanthomonas campestris pv. campestris (strain 8004).